Here is an 89-residue protein sequence, read N- to C-terminus: Small ribosomal subunit protein uS15 (89 aa).

Belongs to the universal ribosomal protein uS15 family. In terms of assembly, part of the 30S ribosomal subunit. Forms a bridge to the 50S subunit in the 70S ribosome, contacting the 23S rRNA.

Its function is as follows. One of the primary rRNA binding proteins, it binds directly to 16S rRNA where it helps nucleate assembly of the platform of the 30S subunit by binding and bridging several RNA helices of the 16S rRNA. Functionally, forms an intersubunit bridge (bridge B4) with the 23S rRNA of the 50S subunit in the ribosome. This chain is Small ribosomal subunit protein uS15, found in Histophilus somni (strain 129Pt) (Haemophilus somnus).